Consider the following 96-residue polypeptide: Small ribosomal subunit protein uS19 (96 aa).

Residues 1-30 (MARSIKKGPFADKHLTKKVEDANKGNKKSV) are disordered. Positions 9–24 (PFADKHLTKKVEDANK) are enriched in basic and acidic residues.

The protein belongs to the universal ribosomal protein uS19 family.

Protein S19 forms a complex with S13 that binds strongly to the 16S ribosomal RNA. The chain is Small ribosomal subunit protein uS19 from Anaeromyxobacter sp. (strain Fw109-5).